We begin with the raw amino-acid sequence, 770 residues long: Formate acetyltransferase (770 aa).

The PFL domain maps to 5–635 (NEMQKLAWAG…KTGNTPDGRR (631 aa)). The active-site S-acetylcysteine intermediate is cysteine 419. The Cysteine radical intermediate role is filled by cysteine 420. Residues 642 to 770 (PGANPMHGRD…VITRTFTESM (129 aa)) form the Glycine radical domain. At glycine 745 the chain carries Glycine radical.

This sequence belongs to the glycyl radical enzyme (GRE) family. PFL subfamily. Homodimer.

It is found in the cytoplasm. It carries out the reaction formate + acetyl-CoA = pyruvate + CoA. The protein operates within fermentation; pyruvate fermentation; formate from pyruvate: step 1/1. Its function is as follows. Catalyzes the conversion of pyruvate to formate and acetyl-CoA. This chain is Formate acetyltransferase (pflB), found in Haemophilus influenzae (strain ATCC 51907 / DSM 11121 / KW20 / Rd).